The following is a 468-amino-acid chain: 6-phospho-beta-galactosidase (468 aa).

D-galactose 6-phosphate is bound by residues glutamine 19, histidine 116, asparagine 159, glutamate 160, and asparagine 297. Glutamate 160 serves as the catalytic Proton donor. Glutamate 375 serves as the catalytic Nucleophile. D-galactose 6-phosphate-binding residues include serine 428, tryptophan 429, lysine 435, and tyrosine 437.

It belongs to the glycosyl hydrolase 1 family.

It catalyses the reaction a 6-phospho-beta-D-galactoside + H2O = D-galactose 6-phosphate + an alcohol. The protein operates within carbohydrate metabolism; lactose degradation; D-galactose 6-phosphate and beta-D-glucose from lactose 6-phosphate: step 1/1. The sequence is that of 6-phospho-beta-galactosidase from Streptococcus pyogenes serotype M6 (strain ATCC BAA-946 / MGAS10394).